We begin with the raw amino-acid sequence, 493 residues long: Betaine aldehyde dehydrogenase (493 aa).

Residues Ser-32, Ile-33, and Asp-99 each coordinate K(+). 156-158 (GAW) is an NAD(+) binding site. Catalysis depends on Lys-168, which acts as the Charge relay system. Residues 182–185 (KPSE) and 235–238 (SVPT) each bind NAD(+). Residue Leu-250 coordinates K(+). The Proton acceptor role is filled by Glu-256. NAD(+) is bound by residues Gly-258, Cys-290, and Glu-390. Cys-290 (nucleophile) is an active-site residue. Cys-290 is modified (cysteine sulfenic acid (-SOH)). Residues Lys-460 and Gly-463 each coordinate K(+). Glu-467 acts as the Charge relay system in catalysis.

The protein belongs to the aldehyde dehydrogenase family. In terms of assembly, dimer of dimers. The cofactor is K(+).

It catalyses the reaction betaine aldehyde + NAD(+) + H2O = glycine betaine + NADH + 2 H(+). The protein operates within amine and polyamine biosynthesis; betaine biosynthesis via choline pathway; betaine from betaine aldehyde: step 1/1. Involved in the biosynthesis of the osmoprotectant glycine betaine. Catalyzes the irreversible oxidation of betaine aldehyde to the corresponding acid. The sequence is that of Betaine aldehyde dehydrogenase from Agrobacterium fabrum (strain C58 / ATCC 33970) (Agrobacterium tumefaciens (strain C58)).